Consider the following 195-residue polypeptide: MAAADTPSATLRHHDLCSRGIRLARKMRSDVTDLLDIYVERQGLDASISVAAVDGVPTAAVERWAEQTGTQRLLDNLAAYRAFRTLLAQMLEEQRELLGDTDAELGPALAAMLLQVSAFVYHLEELLELESRGAPAEEGSEPPAPPRLSLFEQKLRGLRVLRELAQWAVRSVRDLRQLSKHGPGSGAALGLPESQ.

This sequence belongs to the CNTF family. As to expression, nervous system.

It is found in the cytoplasm. In terms of biological role, CNTF is a survival factor for various neuronal cell types. Seems to prevent the degeneration of motor axons after axotomy. The polypeptide is Ciliary neurotrophic factor (CNTF) (Gallus gallus (Chicken)).